The primary structure comprises 195 residues: Large ribosomal subunit protein uL5 (195 aa).

It belongs to the universal ribosomal protein uL5 family. Part of the 50S ribosomal subunit; part of the 5S rRNA/L5/L18/L25 subcomplex. Contacts the 5S rRNA and the P site tRNA. Forms a bridge to the 30S subunit in the 70S ribosome.

In terms of biological role, this is one of the proteins that bind and probably mediate the attachment of the 5S RNA into the large ribosomal subunit, where it forms part of the central protuberance. In the 70S ribosome it contacts protein S13 of the 30S subunit (bridge B1b), connecting the 2 subunits; this bridge is implicated in subunit movement. Contacts the P site tRNA; the 5S rRNA and some of its associated proteins might help stabilize positioning of ribosome-bound tRNAs. In Pelodictyon phaeoclathratiforme (strain DSM 5477 / BU-1), this protein is Large ribosomal subunit protein uL5.